A 407-amino-acid polypeptide reads, in one-letter code: Arginine deiminase (407 aa).

Cysteine 397 functions as the Amidino-cysteine intermediate in the catalytic mechanism.

Belongs to the arginine deiminase family.

Its subcellular location is the cytoplasm. The enzyme catalyses L-arginine + H2O = L-citrulline + NH4(+). The protein operates within amino-acid degradation; L-arginine degradation via ADI pathway; carbamoyl phosphate from L-arginine: step 1/2. This Pediococcus pentosaceus (strain ATCC 25745 / CCUG 21536 / LMG 10740 / 183-1w) protein is Arginine deiminase.